A 256-amino-acid polypeptide reads, in one-letter code: UPF0246 protein PG_1544 (256 aa).

The protein belongs to the UPF0246 family.

The protein is UPF0246 protein PG_1544 of Porphyromonas gingivalis (strain ATCC BAA-308 / W83).